Here is a 192-residue protein sequence, read N- to C-terminus: MLTIDTTIEWLGKFNEKIQENKAYLSELDGPIGDGDHGANMARGMSETMKALEVSNFGNVSEIFKKVAMTLMSKVGGASGPLYGSAFLAMSKTAIETLDTSELIYAGLEAIQKRGKAQVGEKTMVDIWSAFLNDLQTDSASKDNLEKVVKASAGLLATKGRASYLGERSIGHIDPGTQSSAYLFETLLEVVA.

One can recognise a DhaL domain in the interval 5 to 189; the sequence is DTTIEWLGKF…SAYLFETLLE (185 aa). D29, D34, and D36 together coordinate Mg(2+). ADP contacts are provided by residues 37-40, 78-79, G115, M124, R161, and 174-176; these read HGAN, AS, and DPG.

In terms of assembly, homodimer. The dihydroxyacetone kinase complex is composed of a homodimer of DhaM, a homodimer of DhaK and the subunit DhaL. Mg(2+) is required as a cofactor.

Its subcellular location is the cytoplasm. It catalyses the reaction dihydroxyacetone + phosphoenolpyruvate = dihydroxyacetone phosphate + pyruvate. Its pathway is polyol metabolism; glycerol degradation. Functionally, ADP-binding subunit of the dihydroxyacetone kinase, which is responsible for the phosphoenolpyruvate (PEP)-dependent phosphorylation of dihydroxyacetone. DhaL-ADP is converted to DhaL-ATP via a phosphoryl group transfer from DhaM and transmits it to dihydroxyacetone binds to DhaK. The polypeptide is PTS-dependent dihydroxyacetone kinase, ADP-binding subunit DhaL (Lactococcus lactis subsp. lactis (strain IL1403) (Streptococcus lactis)).